The sequence spans 963 residues: Iron-responsive element-binding protein 2 (963 aa).

The [4Fe-4S] cluster site is built by Cys-512, Cys-578, and Cys-581.

It belongs to the aconitase/IPM isomerase family. Interacts with RBCK1 only in iron-rich conditions. Interacts (when associated with the 4Fe-4S) with FBXL5. Interacts with CIAO1 and CIAO2A. [4Fe-4S] cluster serves as cofactor. Ubiquitinated and degraded by the proteasome in presence of high level of iron and oxygen. Ubiquitinated by a SCF complex containing FBXL5. Upon iron and oxygen depletion FBXL5 is degraded, preventing ubiquitination and allowing its RNA-binding activity. In terms of tissue distribution, ubiquitously expressed in rat tissues, the highest amounts present in skeletal muscle and heart.

The protein resides in the cytoplasm. Its function is as follows. RNA-binding protein that binds to iron-responsive elements (IRES), which are stem-loop structures found in the 5'-UTR of ferritin, and delta aminolevulinic acid synthase mRNAs, and in the 3'-UTR of transferrin receptor mRNA. Binding to the IRE element in ferritin results in the repression of its mRNA translation. Binding of the protein to the transferrin receptor mRNA inhibits the degradation of this otherwise rapidly degraded mRNA. The sequence is that of Iron-responsive element-binding protein 2 (Ireb2) from Rattus norvegicus (Rat).